We begin with the raw amino-acid sequence, 437 residues long: Adenylosuccinate synthetase (437 aa).

Residues 13–19 and 41–43 each bind GTP; these read GDEGKGK and GHT. The active-site Proton acceptor is Asp14. Mg(2+)-binding residues include Asp14 and Gly41. IMP contacts are provided by residues 14–17, 39–42, Thr130, Arg144, Gln225, Thr240, and Arg310; these read DEGK and NAGH. Catalysis depends on His42, which acts as the Proton donor. A substrate-binding site is contributed by 306–312; that stretch reads ATTGRLR. Residues Arg312, 338–340, and 421–423 each bind GTP; these read KLD and STG.

This sequence belongs to the adenylosuccinate synthetase family. Homodimer. It depends on Mg(2+) as a cofactor.

It is found in the cytoplasm. The enzyme catalyses IMP + L-aspartate + GTP = N(6)-(1,2-dicarboxyethyl)-AMP + GDP + phosphate + 2 H(+). The protein operates within purine metabolism; AMP biosynthesis via de novo pathway; AMP from IMP: step 1/2. Functionally, plays an important role in the de novo pathway of purine nucleotide biosynthesis. Catalyzes the first committed step in the biosynthesis of AMP from IMP. In Psychromonas ingrahamii (strain DSM 17664 / CCUG 51855 / 37), this protein is Adenylosuccinate synthetase.